Consider the following 116-residue polypeptide: Large ribosomal subunit protein bL20 (116 aa).

Belongs to the bacterial ribosomal protein bL20 family.

Binds directly to 23S ribosomal RNA and is necessary for the in vitro assembly process of the 50S ribosomal subunit. It is not involved in the protein synthesizing functions of that subunit. In Thermosynechococcus vestitus (strain NIES-2133 / IAM M-273 / BP-1), this protein is Large ribosomal subunit protein bL20.